A 78-amino-acid chain; its full sequence is Major outer membrane lipoprotein Lpp (78 aa).

Positions 1 to 20 (MKATKLVLGAVILGSTLLAG) are cleaved as a signal peptide. Residue C21 is the site of N-palmitoyl cysteine attachment. C21 carries S-diacylglycerol cysteine lipidation. 2 consecutive repeats follow at residues 24 to 34 (NAKIDQLSSDV) and 38 to 48 (NAKVDQLSNDV). The stretch at 27-75 (IDQLSSDVQTLNAKVDQLSNDVNAMRSDVQAAKDDAARANQRLDNMATK) forms a coiled coil. An N6-murein peptidoglycan lysine modification is found at K78.

It belongs to the Lpp family. As to quaternary structure, homotrimer.

Its subcellular location is the cell outer membrane. It is found in the secreted. The protein resides in the cell wall. In terms of biological role, a highly abundant outer membrane lipoprotein that controls the distance between the inner and outer membranes. The only protein known to be covalently linked to the peptidoglycan network (PGN). Also non-covalently binds the PGN. The link between the cell outer membrane and PGN contributes to maintenance of the structural and functional integrity of the cell envelope, and maintains the correct distance between the PGN and the outer membrane. This chain is Major outer membrane lipoprotein Lpp, found in Shigella flexneri.